Consider the following 490-residue polypeptide: Bifunctional protein HldE (490 aa).

The tract at residues 1-330 is ribokinase; that stretch reads MERKNVESLF…GSMGFQHSDS (330 aa). 205-208 contacts ATP; sequence NRKE. Asp-275 is a catalytic residue. Residues 356–490 are cytidylyltransferase; the sequence is FTNGCFDLLH…DKILRAYGEE (135 aa).

This sequence in the N-terminal section; belongs to the carbohydrate kinase PfkB family. It in the C-terminal section; belongs to the cytidylyltransferase family. Homodimer.

The catalysed reaction is D-glycero-beta-D-manno-heptose 7-phosphate + ATP = D-glycero-beta-D-manno-heptose 1,7-bisphosphate + ADP + H(+). It carries out the reaction D-glycero-beta-D-manno-heptose 1-phosphate + ATP + H(+) = ADP-D-glycero-beta-D-manno-heptose + diphosphate. The protein operates within nucleotide-sugar biosynthesis; ADP-L-glycero-beta-D-manno-heptose biosynthesis; ADP-L-glycero-beta-D-manno-heptose from D-glycero-beta-D-manno-heptose 7-phosphate: step 1/4. It functions in the pathway nucleotide-sugar biosynthesis; ADP-L-glycero-beta-D-manno-heptose biosynthesis; ADP-L-glycero-beta-D-manno-heptose from D-glycero-beta-D-manno-heptose 7-phosphate: step 3/4. Functionally, catalyzes the phosphorylation of D-glycero-D-manno-heptose 7-phosphate at the C-1 position to selectively form D-glycero-beta-D-manno-heptose-1,7-bisphosphate. Catalyzes the ADP transfer from ATP to D-glycero-beta-D-manno-heptose 1-phosphate, yielding ADP-D-glycero-beta-D-manno-heptose. This is Bifunctional protein HldE from Geobacter metallireducens (strain ATCC 53774 / DSM 7210 / GS-15).